Consider the following 728-residue polypeptide: Phosphoribosylformylglycinamidine synthase subunit PurL (728 aa).

H42 is an active-site residue. ATP contacts are provided by Y45 and K84. Mg(2+) is bound at residue E86. Residues 87–90 and R109 each bind substrate; that span reads SHNH. H88 functions as the Proton acceptor in the catalytic mechanism. D110 is a binding site for Mg(2+). Residue Q237 coordinates substrate. D265 contacts Mg(2+). Position 309-311 (309-311) interacts with substrate; it reads ESQ. ATP contacts are provided by D491 and G528. Mg(2+) is bound at residue N529. S531 contributes to the substrate binding site.

Belongs to the FGAMS family. Monomer. Part of the FGAM synthase complex composed of 1 PurL, 1 PurQ and 2 PurS subunits.

It is found in the cytoplasm. The enzyme catalyses N(2)-formyl-N(1)-(5-phospho-beta-D-ribosyl)glycinamide + L-glutamine + ATP + H2O = 2-formamido-N(1)-(5-O-phospho-beta-D-ribosyl)acetamidine + L-glutamate + ADP + phosphate + H(+). Its pathway is purine metabolism; IMP biosynthesis via de novo pathway; 5-amino-1-(5-phospho-D-ribosyl)imidazole from N(2)-formyl-N(1)-(5-phospho-D-ribosyl)glycinamide: step 1/2. Functionally, part of the phosphoribosylformylglycinamidine synthase complex involved in the purines biosynthetic pathway. Catalyzes the ATP-dependent conversion of formylglycinamide ribonucleotide (FGAR) and glutamine to yield formylglycinamidine ribonucleotide (FGAM) and glutamate. The FGAM synthase complex is composed of three subunits. PurQ produces an ammonia molecule by converting glutamine to glutamate. PurL transfers the ammonia molecule to FGAR to form FGAM in an ATP-dependent manner. PurS interacts with PurQ and PurL and is thought to assist in the transfer of the ammonia molecule from PurQ to PurL. This Campylobacter jejuni (strain RM1221) protein is Phosphoribosylformylglycinamidine synthase subunit PurL.